A 1139-amino-acid chain; its full sequence is Dual 3',5'-cyclic-AMP and -GMP phosphodiesterase beta (1139 aa).

Disordered regions lie at residues 1-42 and 154-177; these read MGKV…NINK and GISE…STSN. Residues 1–429 lie on the Cytoplasmic side of the membrane; the sequence is MGKVEDFEEH…LNLNNWISSR (429 aa). The span at 9-22 shows a compositional bias: basic and acidic residues; the sequence is EHNKNSNQDIEKNV. Polar residues predominate over residues 29–42; it reads NSNTINDQNENINK. A helical transmembrane segment spans residues 430-450; the sequence is MIIIGIVMLILSFIIWPLTTW. The Extracellular segment spans residues 451–462; it reads SLKTSTWGRETY. A helical membrane pass occupies residues 463–483; the sequence is IIILFHTLMAINTLILIFFII. Residues 484-498 are Cytoplasmic-facing; the sequence is IGSTELCKYSECMSY. Residues 499–519 form a helical membrane-spanning segment; sequence VLFSLMVALWGLWNIAIGLTL. At 520-536 the chain is on the extracellular side; the sequence is EYNPNLSEMPTTTYELE. The N-linked (GlcNAc...) asparagine glycan is linked to Asn524. The chain crosses the membrane as a helical span at residues 537-557; the sequence is MIYVLTYIYGFLPLVIIDIFF. Over 558–564 the chain is Cytoplasmic; the sequence is PSRTKYN. A helical transmembrane segment spans residues 565 to 585; sequence WIIHLIFIFLNSSSIILVGSA. Residues 586–592 are Extracellular-facing; the sequence is KPDFVPE. The chain crosses the membrane as a helical span at residues 593–613; it reads IYVVFRILAYTTLCIFLYIGS. At 614–1139 the chain is on the cytoplasmic side; that stretch reads YTSELQIRYV…TLFFIKNVSD (526 aa). Residues 775-1098 form the PDEase domain; that stretch reads INISQLTKMI…IMWDTLMKEE (324 aa). Catalysis depends on His847, which acts as the Proton donor. An a nucleoside 3',5'-cyclic phosphate-binding site is contributed by 847–851; that stretch reads HNTIH. A divalent metal cation is bound by residues His851, His887, Asp888, and Asp1000. 3 residues coordinate a nucleoside 3',5'-cyclic phosphate: Asp888, Asp1000, and Gln1052.

Belongs to the cyclic nucleotide phosphodiesterase family. A divalent metal cation is required as a cofactor.

The protein resides in the cell membrane. It localises to the endoplasmic reticulum membrane. The catalysed reaction is 3',5'-cyclic GMP + H2O = GMP + H(+). It carries out the reaction 3',5'-cyclic AMP + H2O = AMP + H(+). The protein operates within purine metabolism; 3',5'-cyclic GMP degradation; GMP from 3',5'-cyclic GMP: step 1/1. It functions in the pathway purine metabolism; 3',5'-cyclic AMP degradation; AMP from 3',5'-cyclic AMP: step 1/1. Plays a role in signal transduction by regulating the intracellular concentration of cyclic nucleotides cAMP and cGMP. Catalyzes the hydrolysis of both cAMP and cGMP to 5'-AMP and 5'-GMP, respectively. By regulating cAMP levels during the asexual blood stage and, thus PKA activation, required for merozoite invasion of erythrocytes and for the parasite development immediately following invasion. The protein is Dual 3',5'-cyclic-AMP and -GMP phosphodiesterase beta of Plasmodium falciparum (isolate 3D7).